Here is a 602-residue protein sequence, read N- to C-terminus: Beta-(1--&gt;2)glucan export ATP-binding/permease protein NdvA (602 aa).

In terms of domain architecture, ABC transmembrane type-1 spans 21–311; the sequence is GWTLAVANLL…VVSFVNSLMM (291 aa). 6 helical membrane passes run 22-42, 68-88, 146-166, 167-187, 254-274, and 276-296; these read WTLA…PVLF, LLAA…TVAL, EHFA…YINW, RLAI…TLVV, VITR…GIAL, and QQGL…TLLI. An ABC transporter domain is found at 345–579; the sequence is VEFLDVSFSY…RGRFAELARA (235 aa). 378–385 is an ATP binding site; that stretch reads GATGAGKS.

Belongs to the ABC transporter superfamily. Beta-(1--&gt;2)glucan exporter (TC 3.A.1.108.1) family. Homodimer.

It is found in the cell inner membrane. It carries out the reaction [(1-&gt;2)-beta-D-glucosyl](n)(in) + ATP + H2O = [(1-&gt;2)-beta-D-glucosyl](n)(out) + ADP + phosphate + H(+). Functionally, involved in beta-(1--&gt;2)glucan export. Transmembrane domains (TMD) form a pore in the inner membrane and the ATP-binding domain (NBD) is responsible for energy generation. The chain is Beta-(1--&gt;2)glucan export ATP-binding/permease protein NdvA from Rhodopseudomonas palustris (strain BisB5).